The chain runs to 419 residues: Probable glycosidase C21B10.07 (419 aa).

Disordered regions lie at residues 1-20 and 29-67; these read MGIP…AALS and DPAR…NNEN. Residues 30 to 59 are compositionally biased toward basic and acidic residues; it reads PARKNESTNDVIDNHTDTEIDDHDNDHENL. Residues 88 to 108 traverse the membrane as a helical segment; the sequence is FIWILIFIVALICSVLIGVLG. One can recognise a GH16 domain in the interval 122–387; the sequence is PSYKAKTYSL…WAGSSVYSSA (266 aa). The active-site Nucleophile is the Glu-237. Glu-242 acts as the Proton donor in catalysis.

The protein belongs to the glycosyl hydrolase 16 family.

It is found in the membrane. The protein is Probable glycosidase C21B10.07 of Schizosaccharomyces pombe (strain 972 / ATCC 24843) (Fission yeast).